The chain runs to 1220 residues: Plasma membrane calcium-transporting ATPase 1 (1220 aa).

At Gly-2 the chain carries N-acetylglycine. Topologically, residues 2-105 are cytoplasmic; the sequence is GDMANNSVAY…KTFLQLVWEA (104 aa). Phosphoserine occurs at positions 8 and 17. A helical transmembrane segment spans residues 106 to 126; the sequence is LQDVTLIILEIAAIVSLGLSF. At 127–154 the chain is on the extracellular side; sequence YQPPEGDNALCGEVSVGEEEGEGETGWI. Residues 155–175 traverse the membrane as a helical segment; the sequence is EGAAILLSVVCVVLVTAFNDW. Topologically, residues 176–366 are cytoplasmic; sequence SKEKQFRGLQ…KEKSVLQGKL (191 aa). Residues 297–356 form a disordered region; sequence EEEKKDEKKKEKKNKKQDGAIENRNKAKAQDGAAMEMQPLKSEEGGDGDEKDKKKANLPK. 2 stretches are compositionally biased toward basic and acidic residues: residues 312-325 and 337-356; these read KQDG…KAKA and KSEE…NLPK. At Ser-338 the chain carries Phosphoserine. A helical transmembrane segment spans residues 367–386; sequence TKLAVQIGKAGLLMSAITVI. Topologically, residues 387–418 are extracellular; that stretch reads ILVLYFVIDTFWVQKRPWLAECTPIYIQYFVK. The helical transmembrane segment at 419 to 439 threads the bilayer; it reads FFIIGVTVLVVAVPEGLPLAV. The Cytoplasmic segment spans residues 440–855; sequence TISLAYSVKK…RNVYDSISKF (416 aa). Asp-475 serves as the catalytic 4-aspartylphosphate intermediate. Mg(2+) is bound by residues Asp-475, Thr-477, and Asp-797. Residues 856 to 876 form a helical membrane-spanning segment; it reads LQFQLTVNVVAVIVAFTGACI. Residues 877 to 882 lie on the Extracellular side of the membrane; that stretch reads TQDSPL. A helical transmembrane segment spans residues 883–903; it reads KAVQMLWVNLIMDTLASLALA. Over 904–927 the chain is Cytoplasmic; the sequence is TEPPTESLLLRKPYGRNKPLISRT. A helical membrane pass occupies residues 928–948; that stretch reads MMKNILGHAFYQLVVVFTLLF. The Extracellular segment spans residues 949–971; that stretch reads AGEKFFDIDSGRNAPLHAPPSEH. A helical transmembrane segment spans residues 972-991; that stretch reads YTIVFNTFVLMQLFNEINAR. Topologically, residues 992-1005 are cytoplasmic; that stretch reads KIHGERNVFEGIFN. Residues 1006 to 1027 form a helical membrane-spanning segment; that stretch reads NAIFCTIVLGTFVVQIIIVQFG. The Extracellular segment spans residues 1028–1039; the sequence is GKPFSCSELSIE. A helical membrane pass occupies residues 1040 to 1060; sequence QWLWSIFLGMGTLLWGQLIST. Residues 1061 to 1220 lie on the Cytoplasmic side of the membrane; that stretch reads IPTSRLKFLK…SPLHSLETSL (160 aa). The tract at residues 1100–1117 is calmodulin-binding subdomain A; that stretch reads LRRGQILWFRGLNRIQTQ. Thr-1116 carries the phosphothreonine; by PKC modification. The interval 1118–1220 is required for basolateral membrane targeting; it reads IRVVNAFRSS…SPLHSLETSL (103 aa). Phosphoserine occurs at positions 1140 and 1155. The tract at residues 1160–1220 is disordered; it reads PLIDDTDAED…SPLHSLETSL (61 aa). The residue at position 1165 (Thr-1165) is a Phosphothreonine. The residue at position 1178 (Ser-1178) is a Phosphoserine; by PKA. Phosphoserine is present on Ser-1182. A compositionally biased stretch (polar residues) spans 1200-1220; the sequence is MNKSATSSSPGSPLHSLETSL.

This sequence belongs to the cation transport ATPase (P-type) (TC 3.A.3) family. Type IIB subfamily. As to quaternary structure, monomer. Dimer. Oligomer. Calmodulin binding. Interacts with PDZD11. Interacts with SLC35G1 and STIM1; inhibits calcium-transporting ATPase activity after store depletion. Interacts with YWHAE; interacts with the monomeric and dimeric forms of the YWHAE but prefer the monomer form; this interaction inhibits calcium-transporting ATPase activity. Interacts with NPTN; this interaction stabilizes ATP2B1 and increases ATPase activity; this interaction controls T cell calcium homeostasis following T cell activation. Interacts with EPB41; regulates small intestinal calcium absorption through regulation of membrane expression of ATP2B1. As to expression, isoform B: Ubiquitously expressed. Isoform C: Found in brain cortex, skeletal muscle and heart muscle. Isoform D: Has only been found in fetal skeletal muscle. Isoform K: Found in small intestine and liver. Abundantly expressed in the endometrial epithelial cells and glandular epithelial cells in early-proliferative phase and early-secretory phases.

The protein localises to the cell membrane. It localises to the basolateral cell membrane. Its subcellular location is the synapse. The protein resides in the presynaptic cell membrane. It is found in the cytoplasmic vesicle. The protein localises to the secretory vesicle. It localises to the synaptic vesicle membrane. The enzyme catalyses Ca(2+)(in) + ATP + H2O = Ca(2+)(out) + ADP + phosphate + H(+). In terms of biological role, catalyzes the hydrolysis of ATP coupled with the transport of calcium from the cytoplasm to the extracellular space thereby maintaining intracellular calcium homeostasis. Plays a role in blood pressure regulation through regulation of intracellular calcium concentration and nitric oxide production leading to regulation of vascular smooth muscle cells vasoconstriction. Positively regulates bone mineralization through absorption of calcium from the intestine. Plays dual roles in osteoclast differentiation and survival by regulating RANKL-induced calcium oscillations in preosteoclasts and mediating calcium extrusion in mature osteoclasts. Regulates insulin sensitivity through calcium/calmodulin signaling pathway by regulating AKT1 activation and NOS3 activation in endothelial cells. May play a role in synaptic transmission by modulating calcium and proton dynamics at the synaptic vesicles. This chain is Plasma membrane calcium-transporting ATPase 1, found in Homo sapiens (Human).